A 268-amino-acid chain; its full sequence is Small ribosomal subunit protein uS2 (268 aa).

The protein belongs to the universal ribosomal protein uS2 family.

This chain is Small ribosomal subunit protein uS2, found in Coprothermobacter proteolyticus (strain ATCC 35245 / DSM 5265 / OCM 4 / BT).